A 165-amino-acid chain; its full sequence is Small ribosomal subunit protein uS5 (165 aa).

Positions 13 to 76 (LEEKVLVVNR…EAARKNLITI (64 aa)) constitute an S5 DRBM domain.

This sequence belongs to the universal ribosomal protein uS5 family. In terms of assembly, part of the 30S ribosomal subunit. Contacts proteins S4 and S8.

Functionally, with S4 and S12 plays an important role in translational accuracy. In terms of biological role, located at the back of the 30S subunit body where it stabilizes the conformation of the head with respect to the body. The chain is Small ribosomal subunit protein uS5 from Chlamydia abortus (strain DSM 27085 / S26/3) (Chlamydophila abortus).